The primary structure comprises 169 residues: Probable phospholipid hydroperoxide glutathione peroxidase (169 aa).

Residue C43 is part of the active site.

Belongs to the glutathione peroxidase family. Monomer. Has a tendency to form higher mass oligomers. Interacts with FUNDC1; this interaction promotes GPX4 recruitment into mitochondria through TOM/TIM complex where it is degraded by mitophagy.

The protein localises to the cytoplasm. The catalysed reaction is a hydroperoxy polyunsaturated fatty acid + 2 glutathione = a hydroxy polyunsaturated fatty acid + glutathione disulfide + H2O. Protects cells and enzymes from oxidative damage, by catalyzing the reduction of hydrogen peroxide, lipid peroxides and organic hydroperoxide, by glutathione. In Solanum lycopersicum (Tomato), this protein is Probable phospholipid hydroperoxide glutathione peroxidase (GPXle-1).